A 189-amino-acid chain; its full sequence is Thymidine kinase (189 aa).

Residues 9–16 (GTMNSGKS) and 85–88 (DEAQ) contribute to the ATP site. The active-site Proton acceptor is E86. Positions 143, 146, 180, and 183 each coordinate Zn(2+).

Belongs to the thymidine kinase family. Homotetramer.

Its subcellular location is the cytoplasm. The catalysed reaction is thymidine + ATP = dTMP + ADP + H(+). The protein is Thymidine kinase of Lactococcus lactis subsp. lactis (strain IL1403) (Streptococcus lactis).